The chain runs to 223 residues: 26S proteasome non-ATPase regulatory subunit 9 (223 aa).

The segment covering 103 to 121 (RDKEKQARDMAEAHKEAMS) has biased composition (basic and acidic residues). The interval 103 to 141 (RDKEKQARDMAEAHKEAMSRKLGQSESQGPPRAFAKVNS) is disordered. The region spanning 108–195 (QARDMAEAHK…KPLNVTVIRR (88 aa)) is the PDZ domain. A Phosphoserine modification is found at serine 129.

This sequence belongs to the proteasome subunit p27 family. In terms of assembly, interacts with PSMC3. Part of a transient complex (modulator) containing PSMD9, PSMC6 and PSMC3 formed during the assembly of the 26S proteasome. Expressed in all tissues tested, highly expressed in liver and kidney.

Its function is as follows. Acts as a chaperone during the assembly of the 26S proteasome, specifically of the base subcomplex of the PA700/19S regulatory complex (RC). During the base subcomplex assembly is part of an intermediate PSMD9:PSMC6:PSMC3 module, also known as modulator trimer complex; PSMD9 is released during the further base assembly process. The chain is 26S proteasome non-ATPase regulatory subunit 9 (PSMD9) from Homo sapiens (Human).